The sequence spans 256 residues: Hydroxyacylglutathione hydrolase (256 aa).

7 residues coordinate Zn(2+): His55, His57, Asp59, His60, His113, Asp130, and His168.

The protein belongs to the metallo-beta-lactamase superfamily. Glyoxalase II family. As to quaternary structure, monomer. The cofactor is Zn(2+).

The enzyme catalyses an S-(2-hydroxyacyl)glutathione + H2O = a 2-hydroxy carboxylate + glutathione + H(+). The protein operates within secondary metabolite metabolism; methylglyoxal degradation; (R)-lactate from methylglyoxal: step 2/2. In terms of biological role, thiolesterase that catalyzes the hydrolysis of S-D-lactoyl-glutathione to form glutathione and D-lactic acid. In Psychromonas ingrahamii (strain DSM 17664 / CCUG 51855 / 37), this protein is Hydroxyacylglutathione hydrolase.